The following is a 230-amino-acid chain: Porin OmpL (230 aa).

A signal peptide spans 1-20; sequence MKSLNTLVILTSVISTSVFA.

The protein belongs to the oligogalacturonate-specific porin KdgM (TC 1.B.35) family. OmpL subfamily.

The protein localises to the cell outer membrane. Outer membrane channel protein that allows an efficient diffusion of low-molecular-weight solutes such as small sugars and tetraglycine. However, the specific substrate recognized by the OmpL channel is unknown. In Salmonella typhimurium (strain LT2 / SGSC1412 / ATCC 700720), this protein is Porin OmpL (ompL).